We begin with the raw amino-acid sequence, 990 residues long: TonB-dependent receptor P26 (990 aa).

Positions 86–93 match the TonB box motif; it reads DEVVVIGY. The TBDR plug domain occupies 97 to 213; the sequence is RKSDLTGSVS…ANGVVLVTTK (117 aa). In terms of domain architecture, TBDR beta-barrel spans 220-990; that stretch reads SSKPEVSANI…TITLGLNVTF (771 aa). A disordered region spans residues 878-902; that stretch reads TPENPTSDIPRAGGDSVTGTPPNSA. Residues 974–990 carry the TonB C-terminal box motif; that stretch reads GSYPNPRTITLGLNVTF.

The protein belongs to the TonB-dependent receptor family.

It localises to the cell outer membrane. In terms of biological role, tonB-dependent receptor probably involved in ulvan degradation. Ulvan is the main polysaccharide component of the Ulvales (green seaweed) cell wall. It is composed of disaccharide building blocks comprising 3-sulfated rhamnose (Rha3S) linked to D-glucuronic acid (GlcA), L-iduronic acid (IduA), or D-xylose (Xyl). The TonB-dependent receptor may mediate transport of ulvan oligosaccharides from the surface of the outer membrane to the periplasm for subsequent degradation. In Formosa agariphila (strain DSM 15362 / KCTC 12365 / LMG 23005 / KMM 3901 / M-2Alg 35-1), this protein is TonB-dependent receptor P26.